A 379-amino-acid chain; its full sequence is Queuine tRNA-ribosyltransferase (379 aa).

Aspartate 94 functions as the Proton acceptor in the catalytic mechanism. Residues 94–98 (DSGGF), aspartate 148, glutamine 191, and glycine 218 each bind substrate. The interval 249–255 (GVGSPDS) is RNA binding. Aspartate 268 serves as the catalytic Nucleophile. Residues 273–277 (TRIGR) are RNA binding; important for wobble base 34 recognition. Positions 306, 308, 311, and 337 each coordinate Zn(2+).

Belongs to the queuine tRNA-ribosyltransferase family. In terms of assembly, homodimer. Within each dimer, one monomer is responsible for RNA recognition and catalysis, while the other monomer binds to the replacement base PreQ1. The cofactor is Zn(2+).

The enzyme catalyses 7-aminomethyl-7-carbaguanine + guanosine(34) in tRNA = 7-aminomethyl-7-carbaguanosine(34) in tRNA + guanine. The protein operates within tRNA modification; tRNA-queuosine biosynthesis. Its function is as follows. Catalyzes the base-exchange of a guanine (G) residue with the queuine precursor 7-aminomethyl-7-deazaguanine (PreQ1) at position 34 (anticodon wobble position) in tRNAs with GU(N) anticodons (tRNA-Asp, -Asn, -His and -Tyr). Catalysis occurs through a double-displacement mechanism. The nucleophile active site attacks the C1' of nucleotide 34 to detach the guanine base from the RNA, forming a covalent enzyme-RNA intermediate. The proton acceptor active site deprotonates the incoming PreQ1, allowing a nucleophilic attack on the C1' of the ribose to form the product. After dissociation, two additional enzymatic reactions on the tRNA convert PreQ1 to queuine (Q), resulting in the hypermodified nucleoside queuosine (7-(((4,5-cis-dihydroxy-2-cyclopenten-1-yl)amino)methyl)-7-deazaguanosine). The protein is Queuine tRNA-ribosyltransferase of Anoxybacillus flavithermus (strain DSM 21510 / WK1).